The chain runs to 183 residues: Apo-citrate lyase phosphoribosyl-dephospho-CoA transferase (183 aa).

The protein belongs to the CitX family.

It carries out the reaction apo-[citrate lyase ACP] + 2'-(5''-triphospho-alpha-D-ribosyl)-3'-dephospho-CoA = holo-[citrate lyase ACP] + diphosphate. In terms of biological role, transfers 2-(5''-triphosphoribosyl)-3'-dephosphocoenzyme-A on a serine residue to the apo-acyl carrier protein (gamma chain) of the citrate lyase to yield holo-acyl carrier protein. In Shigella flexneri serotype 5b (strain 8401), this protein is Apo-citrate lyase phosphoribosyl-dephospho-CoA transferase.